The primary structure comprises 662 residues: UvrABC system protein B (662 aa).

The region spanning 25-414 is the Helicase ATP-binding domain; sequence TGLNSKKRSQ…GTVVELIIRP (390 aa). Position 38 to 45 (38 to 45) interacts with ATP; it reads GITGSGKT. The Beta-hairpin signature appears at 91 to 114; that stretch reads YYDYYQPESYIVRTDTFIEKDSSI. The Helicase C-terminal domain maps to 430–592; that stretch reads QVEDLISEIQ…IIPKTINRAI (163 aa). The UVR domain occupies 622–657; it reads KAHMDKLKKEMFKAASNLEFEQAAKLRNQLKALEEA.

It belongs to the UvrB family. As to quaternary structure, forms a heterotetramer with UvrA during the search for lesions. Interacts with UvrC in an incision complex.

The protein resides in the cytoplasm. In terms of biological role, the UvrABC repair system catalyzes the recognition and processing of DNA lesions. A damage recognition complex composed of 2 UvrA and 2 UvrB subunits scans DNA for abnormalities. Upon binding of the UvrA(2)B(2) complex to a putative damaged site, the DNA wraps around one UvrB monomer. DNA wrap is dependent on ATP binding by UvrB and probably causes local melting of the DNA helix, facilitating insertion of UvrB beta-hairpin between the DNA strands. Then UvrB probes one DNA strand for the presence of a lesion. If a lesion is found the UvrA subunits dissociate and the UvrB-DNA preincision complex is formed. This complex is subsequently bound by UvrC and the second UvrB is released. If no lesion is found, the DNA wraps around the other UvrB subunit that will check the other stand for damage. The polypeptide is UvrABC system protein B (Rickettsia prowazekii (strain Madrid E)).